The primary structure comprises 198 residues: FMN-dependent NADH:quinone oxidoreductase (198 aa).

FMN is bound by residues Ser-10 and 16–18 (SIS).

It belongs to the azoreductase type 1 family. Homodimer. FMN serves as cofactor.

It carries out the reaction 2 a quinone + NADH + H(+) = 2 a 1,4-benzosemiquinone + NAD(+). The enzyme catalyses N,N-dimethyl-1,4-phenylenediamine + anthranilate + 2 NAD(+) = 2-(4-dimethylaminophenyl)diazenylbenzoate + 2 NADH + 2 H(+). Quinone reductase that provides resistance to thiol-specific stress caused by electrophilic quinones. Its function is as follows. Also exhibits azoreductase activity. Catalyzes the reductive cleavage of the azo bond in aromatic azo compounds to the corresponding amines. The chain is FMN-dependent NADH:quinone oxidoreductase from Mycoplasmopsis pulmonis (strain UAB CTIP) (Mycoplasma pulmonis).